A 407-amino-acid chain; its full sequence is Leucine-rich repeat-containing protein 42 (407 aa).

LRR repeat units lie at residues 138–159, 163–184, 191–211, 223–243, and 247–268; these read VLKS…EEIR, SLEC…FKYI, SLVK…QRLT, NLQL…RYLT, and TLQK…KGFF. A disordered region spans residues 360–389; that stretch reads VQSSPSGETHSTHKSRKRRLSTEEEQSAAP.

The protein belongs to the LRRC42 family.

In Danio rerio (Zebrafish), this protein is Leucine-rich repeat-containing protein 42 (lrrc42).